Consider the following 404-residue polypeptide: Cysteine desulfurase IscS (404 aa).

Pyridoxal 5'-phosphate contacts are provided by residues 75 to 76 (AT), asparagine 155, glutamine 183, and 203 to 205 (SAH). Position 206 is an N6-(pyridoxal phosphate)lysine (lysine 206). Residue threonine 243 participates in pyridoxal 5'-phosphate binding. The Cysteine persulfide intermediate role is filled by cysteine 328. Cysteine 328 serves as a coordination point for [2Fe-2S] cluster.

Belongs to the class-V pyridoxal-phosphate-dependent aminotransferase family. NifS/IscS subfamily. In terms of assembly, homodimer. Forms a heterotetramer with IscU, interacts with other sulfur acceptors. It depends on pyridoxal 5'-phosphate as a cofactor.

The protein localises to the cytoplasm. It carries out the reaction (sulfur carrier)-H + L-cysteine = (sulfur carrier)-SH + L-alanine. It functions in the pathway cofactor biosynthesis; iron-sulfur cluster biosynthesis. Functionally, master enzyme that delivers sulfur to a number of partners involved in Fe-S cluster assembly, tRNA modification or cofactor biosynthesis. Catalyzes the removal of elemental sulfur atoms from cysteine to produce alanine. Functions as a sulfur delivery protein for Fe-S cluster synthesis onto IscU, an Fe-S scaffold assembly protein, as well as other S acceptor proteins. This Pseudomonas aeruginosa (strain LESB58) protein is Cysteine desulfurase IscS.